The primary structure comprises 218 residues: Large ribosomal subunit protein bL25 (218 aa).

The segment at 186 to 218 (AVEEEVPAEDEEIMPEPEVIGEEDEGDEEEPEE) is disordered.

It belongs to the bacterial ribosomal protein bL25 family. CTC subfamily. In terms of assembly, part of the 50S ribosomal subunit; part of the 5S rRNA/L5/L18/L25 subcomplex. Contacts the 5S rRNA. Binds to the 5S rRNA independently of L5 and L18.

Functionally, this is one of the proteins that binds to the 5S RNA in the ribosome where it forms part of the central protuberance. This chain is Large ribosomal subunit protein bL25, found in Halothermothrix orenii (strain H 168 / OCM 544 / DSM 9562).